We begin with the raw amino-acid sequence, 1345 residues long: Membrane-anchored lipid-binding protein LAM4 (1345 aa).

Residues 1–1197 lie on the Cytoplasmic side of the membrane; that stretch reads MTRDSKKKHH…NFSSEIFMNK (1197 aa). 7 disordered regions span residues 51-80, 115-134, 139-164, 190-302, 356-397, 425-447, and 489-531; these read RVGG…KAAA, SLKG…PSLS, EKEK…DGHD, DADN…SLDD, LPEA…KPRR, SFNS…PREM, and STII…NGRQ. Threonine 66 carries the phosphothreonine modification. The span at 216-228 shows a compositional bias: low complexity; it reads SENSTNNKNTSST. Polar residues predominate over residues 246–271; sequence SKSSTPSNQQLNTTEAGSKSKPSSLS. The span at 283–294 shows a compositional bias: low complexity; sequence HSNSHSSSNAIS. The segment covering 425–436 has biased composition (polar residues); the sequence is SFNSSNGLTNND. The span at 498 to 516 shows a compositional bias: low complexity; the sequence is SNGRPSSGLRRSSSKSFSS. Residues 549–616 form the GRAM domain; sequence EFHAIFKDSG…FKTIVQIEKR (68 aa). Over residues 665–677 the composition is skewed to low complexity; that stretch reads SNSNNTNSSSNSI. The segment at 665–722 is disordered; that stretch reads SNSNNTNSSSNSISDDENDDYDDDYDDYGDDDDDLYDNSNNISDSTDMTSSVSIGKPE. The span at 678–700 shows a compositional bias: acidic residues; it reads SDDENDDYDDDYDDYGDDDDDLY. Serine 747 bears the Phosphoserine mark. 2 VASt domains span residues 758–930 and 967–1139; these read NEKL…TRSA and DDSI…SRAK. Residues 930-963 are disordered; sequence ATKRKRSSKENTVTVSTLPKMEPSSHAPTEPDIQ. Positions 1141-1158 are enriched in basic residues; the sequence is KKPVKKVMKSHDKHRPFH. The disordered stretch occupies residues 1141–1172; that stretch reads KKPVKKVMKSHDKHRPFHSKVEQKSSESRKSD. Residues 1159–1172 show a composition bias toward basic and acidic residues; that stretch reads SKVEQKSSESRKSD. Residues 1198-1218 form a helical membrane-spanning segment; sequence LLSPQKLFLILGLTIMLFWSP. Residues 1219-1345 lie on the Lumenal side of the membrane; sequence RLHVFQEKNN…NIERDANDLS (127 aa).

It belongs to the YSP2 family.

Its subcellular location is the endoplasmic reticulum membrane. In terms of biological role, may be involved in sterol transfer between intracellular membranes. This is Membrane-anchored lipid-binding protein LAM4 from Saccharomyces cerevisiae (strain ATCC 204508 / S288c) (Baker's yeast).